The primary structure comprises 104 residues: Chitin-binding protein 2 (104 aa).

Oligomer in an unreduced state. Glycosylated.

In terms of biological role, chitin-binding protein. Has antifungal activity against C.krusei, C.albicans, C.tropicalis and C.parapsilosis. Inhibits C.albicans by increasing cell membrane permeability and production of reactive oxygen species. Has no hemagglutinating activity. This Moringa oleifera (Horseradish tree) protein is Chitin-binding protein 2.